Consider the following 228-residue polypeptide: Ribonuclease 3 (228 aa).

The 130-residue stretch at Arg-5–Gly-134 folds into the RNase III domain. Glu-47 is a Mg(2+) binding site. Asp-51 is an active-site residue. Mg(2+) contacts are provided by Asp-120 and Glu-123. The active site involves Glu-123. Residues Asp-160–Gln-228 form the DRBM domain.

It belongs to the ribonuclease III family. In terms of assembly, homodimer. Mg(2+) serves as cofactor.

Its subcellular location is the cytoplasm. The enzyme catalyses Endonucleolytic cleavage to 5'-phosphomonoester.. In terms of biological role, digests double-stranded RNA. Involved in the processing of primary rRNA transcript to yield the immediate precursors to the large and small rRNAs (23S and 16S). Processes some mRNAs, and tRNAs when they are encoded in the rRNA operon. Processes pre-crRNA and tracrRNA of type II CRISPR loci if present in the organism. In Streptococcus agalactiae serotype III (strain NEM316), this protein is Ribonuclease 3.